Consider the following 668-residue polypeptide: DNA ligase (668 aa).

Residues 31–35 (DAEYD), 80–81 (SL), and glutamate 112 contribute to the NAD(+) site. The active-site N6-AMP-lysine intermediate is the lysine 114. Positions 135, 172, 289, and 313 each coordinate NAD(+). Cysteine 407, cysteine 410, cysteine 425, and cysteine 431 together coordinate Zn(2+). Positions 591–668 (SVPQPLAGKV…NEEQLIELLN (78 aa)) constitute a BRCT domain.

The protein belongs to the NAD-dependent DNA ligase family. LigA subfamily. Mg(2+) serves as cofactor. It depends on Mn(2+) as a cofactor.

It catalyses the reaction NAD(+) + (deoxyribonucleotide)n-3'-hydroxyl + 5'-phospho-(deoxyribonucleotide)m = (deoxyribonucleotide)n+m + AMP + beta-nicotinamide D-nucleotide.. DNA ligase that catalyzes the formation of phosphodiester linkages between 5'-phosphoryl and 3'-hydroxyl groups in double-stranded DNA using NAD as a coenzyme and as the energy source for the reaction. It is essential for DNA replication and repair of damaged DNA. The sequence is that of DNA ligase from Aliivibrio fischeri (strain ATCC 700601 / ES114) (Vibrio fischeri).